Consider the following 147-residue polypeptide: Hemoglobin subunit beta (147 aa).

In terms of domain architecture, Globin spans 3–147; it reads HWTAEEKQLI…VAHALARKYH (145 aa). Heme b contacts are provided by His-64 and His-93.

This sequence belongs to the globin family. In terms of assembly, heterotetramer of two alpha chains and two beta chains. As to expression, red blood cells.

Functionally, involved in oxygen transport from the lung to the various peripheral tissues. This chain is Hemoglobin subunit beta (HBB), found in Cairina moschata (Muscovy duck).